A 37-amino-acid chain; its full sequence is Large ribosomal subunit protein bL36 (37 aa).

The protein belongs to the bacterial ribosomal protein bL36 family.

The sequence is that of Large ribosomal subunit protein bL36 from Leptospira biflexa serovar Patoc (strain Patoc 1 / Ames).